Reading from the N-terminus, the 456-residue chain is tRNA(Ile)-lysidine synthase (456 aa).

Ser-27–Ser-32 lines the ATP pocket.

This sequence belongs to the tRNA(Ile)-lysidine synthase family.

The protein resides in the cytoplasm. It catalyses the reaction cytidine(34) in tRNA(Ile2) + L-lysine + ATP = lysidine(34) in tRNA(Ile2) + AMP + diphosphate + H(+). Its function is as follows. Ligates lysine onto the cytidine present at position 34 of the AUA codon-specific tRNA(Ile) that contains the anticodon CAU, in an ATP-dependent manner. Cytidine is converted to lysidine, thus changing the amino acid specificity of the tRNA from methionine to isoleucine. The chain is tRNA(Ile)-lysidine synthase from Vibrio atlanticus (strain LGP32) (Vibrio splendidus (strain Mel32)).